The following is a 119-amino-acid chain: MNARGALGRYGEDLAARLLAEAGMAVIERNWRCRAGEIDIVARDGDALVFCEVKTRRSPGFEHPMAAVGPVKADRLRRLAEIWLDRHGGPPPGGVRIDLVGVLVPRRGAPVTEHARGVS.

This sequence belongs to the UPF0102 family.

In Streptomyces griseus subsp. griseus (strain JCM 4626 / CBS 651.72 / NBRC 13350 / KCC S-0626 / ISP 5235), this protein is UPF0102 protein SGR_1878.